The sequence spans 187 residues: LSM complex subunit LSM4 (187 aa).

The 84-residue stretch at 2–85 (LPLYLLTNAK…IKFIKLQDNI (84 aa)) folds into the Sm domain. Residues 93-187 (INSNNNSNSN…NSSSPQKVEF (95 aa)) are disordered. The span at 112–167 (NRDSNNNRGNYNRRNNNNGNSNRRPYSQNRQYNNSNSSNINNSINSINSNNQNMNN) shows a compositional bias: low complexity. Arginine 119 is subject to Omega-N-methylarginine. The span at 175–187 (HHFNSSSPQKVEF) shows a compositional bias: polar residues. At serine 181 the chain carries Phosphoserine.

Belongs to the snRNP Sm proteins family. As to quaternary structure, component of the heptameric LSM1-LSM7 complex that forms a seven-membered ring structure with a donut shape. The LSm subunits are arranged in the order LSM1, LSM2, LSM3, LSM6, LSM5, LSM7 and LSM4. Except for LSM1, where a C-terminal helix crosses the ring structure to form additional interactions with LSM3 and LSM6, each subunit interacts only with its two neighboring subunits. The LSM1-LSM7 complex interacts with PAT1; within the complex PAT1 has direct interactions with LSM2 and LSM3. The LSM1-LSM7 complex interacts with XRN1. Component of the heptameric LSM2-LSM8 complex that forms a seven-membered ring structure with a donut shape; an RNA strand can pass through the hole in the center of the ring structure. The LSm subunits are arranged in the order LSM8, LSM2, LSM3, LSM6, LSM5, LSM7 and LSM4. Component of the spliceosome U4/U6-U5 tri-snRNP complex composed of the U4, U6 and U5 snRNAs and at least PRP3, PRP4, PRP6, PRP8, PRP18, PRP31, PRP38, SNU13, SNU23, SNU66, SNU114, SPP381, SMB1, SMD1, SMD2, SMD3, SMX2, SMX3, LSM2, LSM3, LSM4, LSM5, LSM6, LSM7, LSM8, BRR2 and DIB1. May be found in a complex comprising LSM2-LSM7 without LSM1 or LSM8; the complex associates with pre-P RNA and snoRNA SNR5.

The protein localises to the nucleus. It is found in the cytoplasm. Its function is as follows. Component of LSm protein complexes, which are involved in RNA processing and may function in a chaperone-like manner. Component of the cytoplasmic LSM1-LSM7 complex which is involved in mRNA degradation by activating the decapping step. Together with PAT1, the LSM1-LSM7 complex binds to osmotic stress-activated mRNAs to attenuate the osmotic stress response, probably by limiting ribosome access to the mRNA and consequently translation. Component of the nuclear LSM2-LSM8 complex, which is involved in spliceosome assembly. The LSM2-LSM8 complex plays a role in the biogenesis of the spliceosomal U4/U6-U5 tri-snRNP complex by accelerating PRP24-mediated annealing of U4/U6 di-snRNA. The LSM2-LSM8 complex binds U6 snRNA terminating with a non-cyclic 3' phosphate group. LSM2-LSM8 is probably also involved in degradation of nuclear pre-mRNA by targeting them for decapping. LSM2-LSM8 could be involved in processing of pre-tRNAs, pre-rRNAs and U3 snoRNA, although involvement may be indirect. In a complex that probably contains LSM2-LSM7, but not LSM1 or LSM8, associates with the precursor of the RNA component of RNase P (pre-P RNA) and may be involved in maturing pre-P RNA; the complex also associates with snoRNA SNR5. This Saccharomyces cerevisiae (strain ATCC 204508 / S288c) (Baker's yeast) protein is LSM complex subunit LSM4.